The sequence spans 196 residues: ATP-dependent Clp protease proteolytic subunit (196 aa).

Residue Ser101 is the Nucleophile of the active site. His126 is a catalytic residue.

Belongs to the peptidase S14 family. As to quaternary structure, component of the chloroplastic Clp protease core complex.

The protein resides in the plastid. Its subcellular location is the chloroplast stroma. It catalyses the reaction Hydrolysis of proteins to small peptides in the presence of ATP and magnesium. alpha-casein is the usual test substrate. In the absence of ATP, only oligopeptides shorter than five residues are hydrolyzed (such as succinyl-Leu-Tyr-|-NHMec, and Leu-Tyr-Leu-|-Tyr-Trp, in which cleavage of the -Tyr-|-Leu- and -Tyr-|-Trp bonds also occurs).. Functionally, cleaves peptides in various proteins in a process that requires ATP hydrolysis. Has a chymotrypsin-like activity. Plays a major role in the degradation of misfolded proteins. The chain is ATP-dependent Clp protease proteolytic subunit from Pleurastrum terricola (Filamentous green alga).